A 225-amino-acid polypeptide reads, in one-letter code: Orotate phosphoribosyltransferase (225 aa).

Lys-31 contributes to the 5-phospho-alpha-D-ribose 1-diphosphate binding site. Position 39–40 (39–40 (FF)) interacts with orotate. Residues 78–79 (YK), Arg-105, Lys-106, Lys-109, His-111, and 130–138 (DDVLTSGKA) each bind 5-phospho-alpha-D-ribose 1-diphosphate. Orotate-binding residues include Thr-134 and Arg-163.

This sequence belongs to the purine/pyrimidine phosphoribosyltransferase family. PyrE subfamily. As to quaternary structure, homodimer.

It carries out the reaction orotidine 5'-phosphate + diphosphate = orotate + 5-phospho-alpha-D-ribose 1-diphosphate. It functions in the pathway pyrimidine metabolism; UMP biosynthesis via de novo pathway; UMP from orotate: step 1/2. In terms of biological role, catalyzes the transfer of a ribosyl phosphate group from 5-phosphoribose 1-diphosphate to orotate, leading to the formation of orotidine monophosphate (OMP). The protein is Orotate phosphoribosyltransferase (URA5) of Cryptococcus neoformans var. neoformans serotype D (strain B-3501A) (Filobasidiella neoformans).